We begin with the raw amino-acid sequence, 114 residues long: UPF0342 protein SH1117 (114 aa).

The protein belongs to the UPF0342 family.

This is UPF0342 protein SH1117 from Staphylococcus haemolyticus (strain JCSC1435).